The following is a 315-amino-acid chain: DNA-directed RNA polymerase subunit alpha (315 aa).

The alpha N-terminal domain (alpha-NTD) stretch occupies residues 1–228 (MLEIEKPKIE…EHFKLFMTLT (228 aa)). The alpha C-terminal domain (alpha-CTD) stretch occupies residues 245 to 315 (KEKVLEMTIE…LGLGLKKSDE (71 aa)).

It belongs to the RNA polymerase alpha chain family. Homodimer. The RNAP catalytic core consists of 2 alpha, 1 beta, 1 beta' and 1 omega subunit. When a sigma factor is associated with the core the holoenzyme is formed, which can initiate transcription.

The catalysed reaction is RNA(n) + a ribonucleoside 5'-triphosphate = RNA(n+1) + diphosphate. DNA-dependent RNA polymerase catalyzes the transcription of DNA into RNA using the four ribonucleoside triphosphates as substrates. The sequence is that of DNA-directed RNA polymerase subunit alpha from Clostridium novyi (strain NT).